We begin with the raw amino-acid sequence, 329 residues long: BTB/POZ domain-containing adapter for CUL3-mediated RhoA degradation protein 1 (329 aa).

Residues 1–22 (MSAEASGPAAAAAPSLEAPKPS) show a composition bias toward low complexity. The disordered stretch occupies residues 1-31 (MSAEASGPAAAAAPSLEAPKPSGLEPGPAAY). In terms of domain architecture, BTB spans 41-109 (KYVKLNVGGS…LRDGSVPLPE (69 aa)). Positions 282-303 (ATGGAAGAGGAGRGEDEENREH) are disordered.

It belongs to the BACURD family. As to quaternary structure, homotetramer; forms a two-fold symmetric tetramer in solution. Interacts with CUL3; interaction is direct and forms a 5:5 heterodecamer. Component of the BCR(KCTD13) E3 ubiquitin ligase complex, at least composed of CUL3, KCTD13/BACURD1 and RBX1. Interacts with RHOA; with a preference for RhoA-GDP. Interacts with POLD2 and PCNA. Interacts with SPRTN. As to expression, expressed in a wide variety of tissues.

It is found in the nucleus. The protein operates within protein modification; protein ubiquitination. Substrate-specific adapter of a BCR (BTB-CUL3-RBX1) E3 ubiquitin-protein ligase complex required for synaptic transmission. The BCR(KCTD13) E3 ubiquitin ligase complex mediates the ubiquitination of RHOA, leading to its degradation by the proteasome Degradation of RHOA regulates the actin cytoskeleton and promotes synaptic transmission. The chain is BTB/POZ domain-containing adapter for CUL3-mediated RhoA degradation protein 1 (KCTD13) from Homo sapiens (Human).